We begin with the raw amino-acid sequence, 228 residues long: MFDFGLGELIFVGIIALIVLGPERLPEAARTAGRLIGRLQRFVGSVKQELDTQIELEELRKVKQAFEAAAAQVRDSLKETDTDMQNSLHDISDGLKPWEKLPEQRTPADFGVDENGNPLPDTANTVSDGISDVMPSERSDTSAETLGDDRQTGSTAEPAETDKDRAWREYLTASAAAPVVQAVEVSYIDTAVETPVPHTTSLRKQAINRKRDFRPKHRAKPKLRVRKS.

A helical transmembrane segment spans residues 1-21 (MFDFGLGELIFVGIIALIVLG). 2 disordered regions span residues 106–164 (TPAD…TDKD) and 196–228 (VPHTTSLRKQAINRKRDFRPKHRAKPKLRVRKS). Basic and acidic residues predominate over residues 135-151 (PSERSDTSAETLGDDRQ). Residues 206–228 (AINRKRDFRPKHRAKPKLRVRKS) show a composition bias toward basic residues.

It belongs to the TatB family. In terms of assembly, the Tat system comprises two distinct complexes: a TatABC complex, containing multiple copies of TatA, TatB and TatC subunits, and a separate TatA complex, containing only TatA subunits. Substrates initially bind to the TatABC complex, which probably triggers association of the separate TatA complex to form the active translocon.

The protein resides in the cell inner membrane. Its function is as follows. Part of the twin-arginine translocation (Tat) system that transports large folded proteins containing a characteristic twin-arginine motif in their signal peptide across membranes. Together with TatC, TatB is part of a receptor directly interacting with Tat signal peptides. TatB may form an oligomeric binding site that transiently accommodates folded Tat precursor proteins before their translocation. This chain is Sec-independent protein translocase protein TatB, found in Neisseria gonorrhoeae (strain ATCC 700825 / FA 1090).